A 269-amino-acid polypeptide reads, in one-letter code: NAD kinase (269 aa).

D45 acts as the Proton acceptor in catalysis. NAD(+)-binding positions include 45–46 (DG), 122–123 (NE), R149, D151, and A186.

The protein belongs to the NAD kinase family. The cofactor is a divalent metal cation.

Its subcellular location is the cytoplasm. It carries out the reaction NAD(+) + ATP = ADP + NADP(+) + H(+). Functionally, involved in the regulation of the intracellular balance of NAD and NADP, and is a key enzyme in the biosynthesis of NADP. Catalyzes specifically the phosphorylation on 2'-hydroxyl of the adenosine moiety of NAD to yield NADP. This is NAD kinase from Staphylococcus haemolyticus (strain JCSC1435).